A 339-amino-acid polypeptide reads, in one-letter code: MNIQQAIKQIIKKQDLSENEMHKVMNDIMTGKTTDAQIGGFLVGLAIKGESVDEITAAAKTMRSLVKSVTIKNTKHLVDTCGTGGDGLGLFNISTACTFVVAAAGGSVAKHGNSSISSKSGSADVLKAAGVNLDMSVEKISKCIEKIGIGFMFAPFHHIAMKHVIEPRKDLAIKTIFNVLGPLTNPAKVPNQVMGVYAQSLVEPIAYVLKNLGSKHVIVVHSKDGLDEISIADDTFVAELKNGQVSTYTINPADFSLPLGNLNDIKANNADYSLVLIQQALDGKDGVAKNIIALNSGAAIYVCGLANSLQKGVNKALNILNSDVAHQKLDDFVRESTDC.

5-phospho-alpha-D-ribose 1-diphosphate contacts are provided by residues Gly-82, 85 to 86 (GD), 92 to 95 (NIST), 110 to 118 (KHGNSSISS), and Ser-122. Residue Gly-82 participates in anthranilate binding. Mg(2+) is bound at residue Ser-94. Asn-113 contributes to the anthranilate binding site. An anthranilate-binding site is contributed by Arg-168. Mg(2+)-binding residues include Asp-227 and Glu-228.

The protein belongs to the anthranilate phosphoribosyltransferase family. Homodimer. The cofactor is Mg(2+).

It catalyses the reaction N-(5-phospho-beta-D-ribosyl)anthranilate + diphosphate = 5-phospho-alpha-D-ribose 1-diphosphate + anthranilate. Its pathway is amino-acid biosynthesis; L-tryptophan biosynthesis; L-tryptophan from chorismate: step 2/5. Its function is as follows. Catalyzes the transfer of the phosphoribosyl group of 5-phosphorylribose-1-pyrophosphate (PRPP) to anthranilate to yield N-(5'-phosphoribosyl)-anthranilate (PRA). The chain is Anthranilate phosphoribosyltransferase from Ruthia magnifica subsp. Calyptogena magnifica.